The primary structure comprises 105 residues: Protamine-2 (105 aa).

The tract at residues 1–74 (MVRYRMRSPS…RRSCRRRRRH (74 aa)) is disordered. Phosphoserine is present on residues S8, S10, and S33. Residues 33–42 (SPERVEDYGR) are compositionally biased toward basic and acidic residues. Residues 43–74 (THRGHHRHRRCSRKRLHRIHKRRRSCRRRRRH) are compositionally biased toward basic residues.

The protein belongs to the protamine P2 family. Interacts with TDRP. Proteolytic processing into mature chains is required for histone eviction during spermatogenesis. Transition proteins (TNP1 and TNP2) are required for processing. As to expression, testis.

The protein resides in the nucleus. The protein localises to the chromosome. Protamines substitute for histones in the chromatin of sperm during the haploid phase of spermatogenesis. They compact sperm DNA into a highly condensed, stable and inactive complex. This Rattus fuscipes (Bush rat) protein is Protamine-2 (Prm2).